Reading from the N-terminus, the 192-residue chain is Phosphoheptose isomerase (192 aa).

The SIS domain occupies 34–192; the sequence is LADALGNGKK…LEKRLFGERR (159 aa). 49-51 lines the substrate pocket; that stretch reads NGG. Zn(2+) is bound by residues His-58 and Glu-62. Substrate-binding positions include Glu-62, 91–92, 117–119, Ser-122, and Gln-169; these read ND and STS. The Zn(2+) site is built by Gln-169 and His-177.

It belongs to the SIS family. GmhA subfamily. As to quaternary structure, homotetramer. Requires Zn(2+) as cofactor.

It is found in the cytoplasm. The enzyme catalyses 2 D-sedoheptulose 7-phosphate = D-glycero-alpha-D-manno-heptose 7-phosphate + D-glycero-beta-D-manno-heptose 7-phosphate. It participates in carbohydrate biosynthesis; D-glycero-D-manno-heptose 7-phosphate biosynthesis; D-glycero-alpha-D-manno-heptose 7-phosphate and D-glycero-beta-D-manno-heptose 7-phosphate from sedoheptulose 7-phosphate: step 1/1. Its function is as follows. Catalyzes the isomerization of sedoheptulose 7-phosphate in D-glycero-D-manno-heptose 7-phosphate. This is Phosphoheptose isomerase from Geotalea daltonii (strain DSM 22248 / JCM 15807 / FRC-32) (Geobacter daltonii).